The chain runs to 787 residues: MGIELVCLFLLLLGRNDHVQGGCAWGGAESCSDCLLTGPHCAWCSQENFTHLSGAGERCDTPANLLAKGCQLPFIENPVSRIEVLQNKPLSVGRQKNSSDIVQIAPQSLVLKLRPGREQTLQVQVRQTEDYPVDLYYLMDLSASMDDDLNTIKELGSRLAKEMSKLTSNFRLGFGSFVEKPVSPFMKTTPEEITNPCSSIPYFCLPTFGFKHILPLTDDAERFNEIVRKQKISANIDTPEGGFDAIMQAAVCKEKIGWRNDSLHLLVFVSDADSHFGMDSKLAGIVIPNDGLCHLDHRNEYSMSTVLEYPTIGQLIDKLVQNNVLLIFAVTQEQVHLYENYAKLIPGATVGLLQKDSGNILQLIISAYEELRSEVELEVLGDTEGLNLSFTALCNNGVLFPHQKKCSHMKVGDTASFNVTVSVSNCEKRSRNLIIKPVGLGDTLEILVSAECDCDCQREIETNSSKCHNGNGSFQCGVCTCNPGHMGPHCECGEDMVSTDSCKESPGHPSCSGRGDCYCGQCICHLSPYGSIYGPYCQCDNFSCLRHKGLLCGDNGDCDCGECVCRDGWTGEYCNCTTNRDSCTSEDGVLCSGRGDCVCGKCVCRNPGASGPTCERCPTCGDPCNSKRSCIECYLSADGQAQEECADKCKAIGATISEEDFSKDTSVSCSLQGENECLITFLITTDNEGKTIIHNINEKDCPKPPNIPMIMLGVSLAILLIGVVLLCIWKLLVSFHDRKEVAKFEAERSKAKWQTGTNPLYRGSTSTFKNVTYKHREKHKAGLSSDG.

An N-terminal signal peptide occupies residues 1–21 (MGIELVCLFLLLLGRNDHVQG). In terms of domain architecture, PSI spans 22-71 (GCAWGGAESCSDCLLTGPHCAWCSQENFTHLSGAGERCDTPANLLAKGCQ). The Extracellular portion of the chain corresponds to 22–708 (GCAWGGAESC…KDCPKPPNIP (687 aa)). 19 disulfide bridges follow: Cys-23/Cys-41, Cys-31/Cys-454, Cys-34/Cys-59, Cys-44/Cys-70, Cys-197/Cys-204, Cys-252/Cys-293, Cys-394/Cys-406, Cys-426/Cys-452, Cys-456/Cys-476, Cys-467/Cys-479, Cys-481/Cys-490, Cys-492/Cys-519, Cys-502/Cys-517, Cys-511/Cys-522, Cys-524/Cys-537, Cys-539/Cys-560, Cys-544/Cys-558, Cys-552/Cys-563, and Cys-565/Cys-574. Residues Asn-48 and Asn-97 are each glycosylated (N-linked (GlcNAc...) asparagine). The VWFA domain maps to 131–371 (YPVDLYYLMD…QLIISAYEEL (241 aa)). Positions 140, 142, and 144 each coordinate Mg(2+). Ser-144, Asp-147, Asp-148, and Glu-179 together coordinate Ca(2+). Ca(2+) contacts are provided by Asn-235, Asp-237, Pro-239, and Glu-240. Glu-240 contacts Mg(2+). N-linked (GlcNAc...) asparagine glycosylation is present at Asn-260. Ca(2+)-binding residues include Asp-271 and Lys-355. Asn-387 is a glycosylation site (N-linked (GlcNAc...) asparagine). A glycan (N-linked (GlcNAc...) asparagine) is linked at Asn-418. I-EGF domains are found at residues 456–491 (CQRE…PHCE), 492–538 (CGED…PYCQ), 539–575 (CDNF…EYCN), and 576–615 (CTTN…PTCE). 2 N-linked (GlcNAc...) asparagine glycosylation sites follow: Asn-463 and Asn-471. An N-linked (GlcNAc...) asparagine glycan is attached at Asn-541. Asn-575 is a glycosylation site (N-linked (GlcNAc...) asparagine). 9 disulfides stabilise this stretch: Cys-576–Cys-599, Cys-583–Cys-597, Cys-591–Cys-602, Cys-604–Cys-614, Cys-617–Cys-620, Cys-624–Cys-669, Cys-630–Cys-649, Cys-633–Cys-645, and Cys-677–Cys-701. A helical transmembrane segment spans residues 709 to 729 (MIMLGVSLAILLIGVVLLCIW). The tract at residues 730–757 (KLLVSFHDRKEVAKFEAERSKAKWQTGT) is interaction with HAX1. Residues 730–787 (KLLVSFHDRKEVAKFEAERSKAKWQTGTNPLYRGSTSTFKNVTYKHREKHKAGLSSDG) lie on the Cytoplasmic side of the membrane.

It belongs to the integrin beta chain family. As to quaternary structure, heterodimer of an alpha and a beta subunit. Interacts with FLNB. Interacts with HAX1. ITGAV:ITGB6 interacts with FBN1. ITGAV:ITGB6 interacts with TGFB1.

It localises to the cell membrane. The protein localises to the cell junction. The protein resides in the focal adhesion. In terms of biological role, integrin alpha-V:beta-6 (ITGAV:ITGB6) is a receptor for fibronectin and cytotactin. It recognizes the sequence R-G-D in its ligands. ITGAV:ITGB6 acts as a receptor for fibrillin-1 (FBN1) and mediates R-G-D-dependent cell adhesion to FBN1. Integrin alpha-V:beta-6 (ITGAV:ITGB6) mediates R-G-D-dependent release of transforming growth factor beta-1 (TGF-beta-1) from regulatory Latency-associated peptide (LAP), thereby playing a key role in TGF-beta-1 activation. In Mus musculus (Mouse), this protein is Integrin beta-6 (Itgb6).